A 187-amino-acid chain; its full sequence is Inner membrane-spanning protein YciB (187 aa).

The next 5 membrane-spanning stretches (helical) occupy residues 22 to 42 (IYVA…VTYA), 50 to 70 (MQLI…FFHD), 80 to 100 (IIYV…KSVV), 118 to 138 (INWA…YIAY), and 148 to 168 (FKVF…GVYI).

The protein belongs to the YciB family.

It localises to the cell inner membrane. Its function is as follows. Plays a role in cell envelope biogenesis, maintenance of cell envelope integrity and membrane homeostasis. The polypeptide is Inner membrane-spanning protein YciB (Vibrio parahaemolyticus serotype O3:K6 (strain RIMD 2210633)).